We begin with the raw amino-acid sequence, 147 residues long: Austinoid biosynthesis cluster protein H (147 aa).

This sequence belongs to the trt14 isomerase family. In terms of assembly, homodimer.

The protein operates within secondary metabolite biosynthesis; terpenoid biosynthesis. Functionally, part of the gene cluster that mediates the biosynthesis of calidodehydroaustin, a fungal meroterpenoid. The first step of the pathway is the synthesis of 3,5-dimethylorsellinic acid by the polyketide synthase ausA. 3,5-dimethylorsellinic acid is then prenylated by the polyprenyl transferase ausN. Further epoxidation by the FAD-dependent monooxygenase ausM and cyclization by the probable terpene cyclase ausL lead to the formation of protoaustinoid A. Protoaustinoid A is then oxidized to spiro-lactone preaustinoid A3 by the combined action of the FAD-binding monooxygenases ausB and ausC, and the dioxygenase ausE. Acid-catalyzed keto-rearrangement and ring contraction of the tetraketide portion of preaustinoid A3 by ausJ lead to the formation of preaustinoid A4. The aldo-keto reductase ausK, with the help of ausH, is involved in the next step by transforming preaustinoid A4 into isoaustinone which is in turn hydroxylated by the P450 monooxygenase ausI to form austinolide. The cytochrome P450 monooxygenase ausG modifies austinolide to austinol. Austinol is further acetylated to austin by the O-acetyltransferase ausP, which spontaneously changes to dehydroaustin. The cytochrome P450 monooxygenase ausR then converts dehydroaustin is into 7-dehydrodehydroaustin. The hydroxylation catalyzed by ausR permits the O-acetyltransferase ausQ to add an additional acetyl group to the molecule, leading to the formation of acetoxydehydroaustin. The short chain dehydrogenase ausT catalyzes the reduction of the double bond present between carbon atoms 1 and 2 to convert 7-dehydrodehydroaustin into 1,2-dihydro-7-hydroxydehydroaustin. AusQ catalyzes not only an acetylation reaction but also the addition of the PKS ausV diketide product to 1,2-dihydro-7-hydroxydehydroaustin, forming precalidodehydroaustin. Finally, the iron/alpha-ketoglutarate-dependent dioxygenase converts precalidodehydroaustin into calidodehydroaustin. This Aspergillus calidoustus protein is Austinoid biosynthesis cluster protein H.